The following is a 418-amino-acid chain: Glutamate-1-semialdehyde 2,1-aminomutase (418 aa).

Lys-262 is modified (N6-(pyridoxal phosphate)lysine).

It belongs to the class-III pyridoxal-phosphate-dependent aminotransferase family. HemL subfamily. Requires pyridoxal 5'-phosphate as cofactor.

It localises to the cytoplasm. It carries out the reaction (S)-4-amino-5-oxopentanoate = 5-aminolevulinate. It participates in porphyrin-containing compound metabolism; protoporphyrin-IX biosynthesis; 5-aminolevulinate from L-glutamyl-tRNA(Glu): step 2/2. The sequence is that of Glutamate-1-semialdehyde 2,1-aminomutase (hemL) from Archaeoglobus fulgidus (strain ATCC 49558 / DSM 4304 / JCM 9628 / NBRC 100126 / VC-16).